The following is a 538-amino-acid chain: [Pyruvate dehydrogenase [acetyl-transferring]]-phosphatase 1, mitochondrial (538 aa).

The N-terminal 71 residues, 1-71 (MPAPTQLFFP…WWQYTQGRRY (71 aa)), are a transit peptide targeting the mitochondrion. Residues 109 to 525 (ILGFDSNQLP…DDITIIVVQF (417 aa)) form the PPM-type phosphatase domain. Positions 144 and 145 each coordinate Mn(2+). An N6-acetyllysine modification is found at lysine 202. Residues aspartate 418 and aspartate 516 each coordinate Mn(2+).

This sequence belongs to the PP2C family. As to quaternary structure, heterodimer of a catalytic (PDP1) and a regulatory (PDPR) subunit. Mn(2+) serves as cofactor. Requires Mg(2+) as cofactor.

It localises to the mitochondrion. The enzyme catalyses O-phospho-L-seryl-[pyruvate dehydrogenase E1 alpha subunit] + H2O = L-seryl-[pyruvate dehydrogenase E1 alpha subunit] + phosphate. Magnesium-dependent and calcium-stimulated. PDP1 activity strongly depends on its Ca(2+)-dependent binding to the lipoyl domain of E2 subunit of component of the pyruvate dehydrogenase complex. Its function is as follows. Mitochondrial enzyme that catalyzes the dephosphorylation and concomitant reactivation of the alpha subunit of the E1 component of the pyruvate dehydrogenase complex (PDC), thereby stimulating the conversion of pyruvate into acetyl-CoA. The sequence is that of [Pyruvate dehydrogenase [acetyl-transferring]]-phosphatase 1, mitochondrial (Pdp1) from Mus musculus (Mouse).